The primary structure comprises 690 residues: MARKYPLDKYRNIGIMAHIDAGKTTTTERILFYTGKSYKIGEVHEGTATMDWMEQEQERGITITSAATTCFWNDHRINIIDTPGHVDFTIEVERSLRVLDGAVACFDGVAGVEPQSETVWRQAEKYHVPRMCFVNKLDRTGANFMRCVDMIRDRLGARPLVLYLPIGIESDFKGLVDLVENRAIIWLEESLGAKFEYQEIPEEYKAEAEAARAEMIEMAVEQDDAAMEAYLEGNEPDADTLKKLIRKGTLAQDFVPVLCGSAFKNKGVQPLLDAVVDFLPSPLDIPPVEGVKMDGETKDSRKPSDDEPFSALAFKIMNDPFVGSLTFARIYSGKLTKGTVLNSVKDKREKVGRMLLMHANSREDLEEAYAGDIVALVGMKETTTGDTLCAPNAPIILERMEFPEPVIEVAVEPKTKADQEKMGLALNRLAAEDPSFRVASDFESGQTIIKGMGELHLDILVDRMKREFKVEANVGAPQVAYRESLARPVEVDYTHKKQSGGSGQFGRVKVNLVPSERGAGIQFFDEIKGGNIPREYIPSVEKGMRETAETGSLIGFPIIDFEIHLTDGAYHDVDSSALAFEIAGRGAMREAAQKAGIKLLEPVMRVEVITPEDYLGDVIGDMNSRRGQIQGTDTRGNAQVVEAMVPLANMFGYVNQLRSFTQGRAQYSMQFSHYDEVPANVADELKSKMA.

The 276-residue stretch at 8-283 folds into the tr-type G domain; that stretch reads DKYRNIGIMA…AVVDFLPSPL (276 aa). GTP is bound by residues 17-24, 81-85, and 135-138; these read AHIDAGKT, DTPGH, and NKLD.

Belongs to the TRAFAC class translation factor GTPase superfamily. Classic translation factor GTPase family. EF-G/EF-2 subfamily.

It localises to the cytoplasm. In terms of biological role, catalyzes the GTP-dependent ribosomal translocation step during translation elongation. During this step, the ribosome changes from the pre-translocational (PRE) to the post-translocational (POST) state as the newly formed A-site-bound peptidyl-tRNA and P-site-bound deacylated tRNA move to the P and E sites, respectively. Catalyzes the coordinated movement of the two tRNA molecules, the mRNA and conformational changes in the ribosome. This is Elongation factor G from Zymomonas mobilis subsp. mobilis (strain ATCC 31821 / ZM4 / CP4).